The following is an 893-amino-acid chain: DNA mismatch repair protein MutS (893 aa).

Positions Met1–Ala17 are enriched in low complexity. Residues Met1 to Thr22 form a disordered region. ATP is bound at residue Gly641–Ser648.

It belongs to the DNA mismatch repair MutS family.

Functionally, this protein is involved in the repair of mismatches in DNA. It is possible that it carries out the mismatch recognition step. This protein has a weak ATPase activity. The sequence is that of DNA mismatch repair protein MutS from Herminiimonas arsenicoxydans.